Reading from the N-terminus, the 271-residue chain is 5'-AMP-activated protein kinase subunit beta-2 (271 aa).

Residues 1–46 form a disordered region; that stretch reads MGNTTSERVSGERHGAKAARAEGGGHGPGKEHKIMVGSTDDPSVFS. Phosphoserine; by ULK1 is present on Ser38. Residue Thr39 is modified to Phosphothreonine; by ULK1. Position 68 is a phosphoserine; by ULK1 (Ser68). Residues Ser94 and Ser107 each carry the phosphoserine modification. Thr147 carries the post-translational modification Phosphothreonine. Ser157, Ser169, Ser173, and Ser183 each carry phosphoserine.

Belongs to the 5'-AMP-activated protein kinase beta subunit family. As to quaternary structure, AMPK is a heterotrimer of an alpha catalytic subunit (PRKAA1 or PRKAA2), a beta (PRKAB1 or PRKAB2) and a gamma non-catalytic subunits (PRKAG1, PRKAG2 or PRKAG3). Post-translationally, phosphorylated when associated with the catalytic subunit (PRKAA1 or PRKAA2). Phosphorylated by ULK1 and ULK2; leading to negatively regulate AMPK activity and suggesting the existence of a regulatory feedback loop between ULK1, ULK2 and AMPK.

Functionally, non-catalytic subunit of AMP-activated protein kinase (AMPK), an energy sensor protein kinase that plays a key role in regulating cellular energy metabolism. In response to reduction of intracellular ATP levels, AMPK activates energy-producing pathways and inhibits energy-consuming processes: inhibits protein, carbohydrate and lipid biosynthesis, as well as cell growth and proliferation. AMPK acts via direct phosphorylation of metabolic enzymes, and by longer-term effects via phosphorylation of transcription regulators. Also acts as a regulator of cellular polarity by remodeling the actin cytoskeleton; probably by indirectly activating myosin. Beta non-catalytic subunit acts as a scaffold on which the AMPK complex assembles, via its C-terminus that bridges alpha (PRKAA1 or PRKAA2) and gamma subunits (PRKAG1, PRKAG2 or PRKAG3). The chain is 5'-AMP-activated protein kinase subunit beta-2 (Prkab2) from Mus musculus (Mouse).